The following is a 438-amino-acid chain: Thymidine phosphorylase (438 aa).

It belongs to the thymidine/pyrimidine-nucleoside phosphorylase family. In terms of assembly, homodimer.

The catalysed reaction is thymidine + phosphate = 2-deoxy-alpha-D-ribose 1-phosphate + thymine. It functions in the pathway pyrimidine metabolism; dTMP biosynthesis via salvage pathway; dTMP from thymine: step 1/2. The enzymes which catalyze the reversible phosphorolysis of pyrimidine nucleosides are involved in the degradation of these compounds and in their utilization as carbon and energy sources, or in the rescue of pyrimidine bases for nucleotide synthesis. This chain is Thymidine phosphorylase, found in Burkholderia orbicola (strain AU 1054).